The following is a 478-amino-acid chain: MYQLAFLRCRYASPIVREARRAFHASRKCQYYIDGPQEPFSPMPGRFPKWASNGDETFGFLKDGANVFIHGGAATPSLLIKELYEYVMSKNLKDIKLFHIHTEGPYPFNDAEGHFRSTSLFTGGNCRKAIQEGRADYTPIFLSEIPLLFRRKHVQLDLALINVTPPDKHGFCSLGPSVDVTRAAIQNATHIVAQVNDQLPLTRGDASIHFSNLTVMRAGSQPCHEMSPRPASEVEDKIGQIIAENLVEDGATLQTGIGAIPDAVLSKLTNHKNLGVHTEMFSDGVVQLVQLGAITNAYKKLRPGKVVSSFVVGTRKVFDFLDNNPMVDMCDVAWVNSPVVIAQNPKPVAINSCIEIDITGQVSSDSIGTTIYSGFGGQVDFLRGAAVSLDGQGKPIIAVPSVTKRNETKIVPHLKLGGGVVTTRAHVHYVVTEYGIAYLFGKNLRQRAHALIQIAHPDHRESLEKAAFDRLKVMPSPL.

The N-terminal 30 residues, 1-30 (MYQLAFLRCRYASPIVREARRAFHASRKCQ), are a transit peptide targeting the mitochondrion. CoA is bound at residue 256-260 (GIGAI). Glu279 (5-glutamyl coenzyme A thioester intermediate) is an active-site residue. 3 residues coordinate CoA: Ile354, Gly377, and Lys404.

This sequence belongs to the acetyl-CoA hydrolase/transferase family.

Its subcellular location is the mitochondrion. It catalyses the reaction succinyl-CoA + acetate = succinate + acetyl-CoA. The catalysed reaction is propanoyl-CoA + succinate = propanoate + succinyl-CoA. Its function is as follows. Transferase involved in anaerobic fumarate-respiration in the mitochondria. Catalyzes the transfer of the CoA moiety of acetyl-CoA or propionyl-CoA to succinate, thereby forming acetate and propionate, respectively. Acetate and propionate are the two major metabolic end products in the anaerobic mitochondrial metabolism of F.hepatica. Also displays CoA transferase activities from acetyl-CoA to propionate, acetate and butyrate. The polypeptide is Succinyl-CoA:acetate/propanoyl-CoA:succinate CoA transferase (Fasciola hepatica (Liver fluke)).